A 177-amino-acid chain; its full sequence is Large ribosomal subunit protein uL6 (177 aa).

The protein belongs to the universal ribosomal protein uL6 family. Part of the 50S ribosomal subunit.

This protein binds to the 23S rRNA, and is important in its secondary structure. It is located near the subunit interface in the base of the L7/L12 stalk, and near the tRNA binding site of the peptidyltransferase center. This chain is Large ribosomal subunit protein uL6, found in Ralstonia pickettii (strain 12J).